We begin with the raw amino-acid sequence, 137 residues long: Small ribosomal subunit protein uS12 (137 aa).

Residues Met1–Lys57 form a disordered region. Residue Asp102 is modified to 3-methylthioaspartic acid.

Belongs to the universal ribosomal protein uS12 family. Part of the 30S ribosomal subunit. Contacts proteins S8 and S17. May interact with IF1 in the 30S initiation complex.

With S4 and S5 plays an important role in translational accuracy. Its function is as follows. Interacts with and stabilizes bases of the 16S rRNA that are involved in tRNA selection in the A site and with the mRNA backbone. Located at the interface of the 30S and 50S subunits, it traverses the body of the 30S subunit contacting proteins on the other side and probably holding the rRNA structure together. The combined cluster of proteins S8, S12 and S17 appears to hold together the shoulder and platform of the 30S subunit. This chain is Small ribosomal subunit protein uS12, found in Streptococcus pneumoniae (strain Hungary19A-6).